Here is a 772-residue protein sequence, read N- to C-terminus: Phosphatidylinositol 4-phosphate 5-kinase 5 (772 aa).

Residues 22 to 56 (AKKRANSVFGTVSVAPHTDNDTTTDDNDDETTTNR) form a disordered region. The segment covering 43 to 52 (TTTDDNDDET) has biased composition (acidic residues). MORN repeat units lie at residues 75–97 (YTGQ…DGCM), 98–120 (YIGD…SGAT), 121–143 (YEGE…SGDA), 144–166 (YKGQ…NGDA), 167–189 (YDGE…DGSY), 190–212 (YIGE…NGNR), 213–235 (YDGF…NGSF), and 236–257 (YVGH…SGNE). The PIPK domain maps to 377 to 768 (SKGHRNYELM…RFRDFIFKVF (392 aa)). The segment at 646–665 (SGARTPIGESEEESGPRLSR) is disordered. The segment at 728–749 (YDISKKLEHAYKSIQYDPSSIS) is activation loop.

It catalyses the reaction a 1,2-diacyl-sn-glycero-3-phospho-(1D-myo-inositol 4-phosphate) + ATP = a 1,2-diacyl-sn-glycero-3-phospho-(1D-myo-inositol-4,5-bisphosphate) + ADP + H(+). The sequence is that of Phosphatidylinositol 4-phosphate 5-kinase 5 (PIP5K5) from Arabidopsis thaliana (Mouse-ear cress).